A 77-amino-acid chain; its full sequence is Omega-conotoxin-like 6 (77 aa).

The signal sequence occupies residues M1–A22. Positions D23–G50 are excised as a propeptide. 3 disulfide bridges follow: C46–C61, C53–C64, and C60–C71.

It belongs to the conotoxin O1 superfamily. In terms of tissue distribution, expressed by the venom duct.

The protein localises to the secreted. Functionally, omega-conotoxins act at presynaptic membranes, they bind and block voltage-gated calcium channels (Cav). This chain is Omega-conotoxin-like 6, found in Conus striatus (Striated cone).